The chain runs to 1349 residues: Spike glycoprotein (1349 aa).

The first 13 residues, 1–13 (MFFILLITLPSVF), serve as a signal peptide directing secretion. Topologically, residues 14–1293 (AVIGDLKCNT…GTYEYYVKWP (1280 aa)) are extracellular. The BetaCoV S1-NTD domain maps to 15–298 (VIGDLKCNTS…DFMSEIMCKT (284 aa)). Cystine bridges form between Cys21-Cys165, Cys160-Cys193, Cys172-Cys252, Cys286-Cys296, Cys331-Cys356, Cys374-Cys427, and Cys386-Cys601. Asn22, Asn59, and Asn133 each carry an N-linked (GlcNAc...) asparagine; by host glycan. An N-linked (GlcNAc...) asparagine; by host glycan is attached at Asn198. One can recognise a BetaCoV S1-CTD domain in the interval 329-603 (PNCDIEAWLN…DVNSGTTCST (275 aa)). 11 N-linked (GlcNAc...) asparagine; by host glycosylation sites follow: Asn437, Asn456, Asn512, Asn611, Asn635, Asn662, Asn682, Asn700, Asn725, Asn774, and Asn881. 2 fusion peptide regions span residues 900–921 (SAIE…VQAY) and 919–939 (QAYN…VQSY). The N-linked (GlcNAc...) asparagine; by host glycan is linked to Asn923. An intrachain disulfide couples Cys924 to Cys935. The tract at residues 1000 to 1050 (QKLIASAFNNALDSIQEGFDATNSALVKIQAVVNANAEALNNLLQQLSNRF) is heptad repeat 1. The stretch at 1029-1073 (QAVVNANAEALNNLLQQLSNRFGAISASLQEILSRLDALEAKAQI) forms a coiled coil. Residues Asn1180, Asn1210, Asn1220, Asn1239, Asn1253, and Asn1274 are each glycosylated (N-linked (GlcNAc...) asparagine; by host). Residues 1244 to 1282 (APDLSFDYINVTFLDLQDEMNRLQEAIKVLNHSYINLKD) are heptad repeat 2. Positions 1255 to 1283 (TFLDLQDEMNRLQEAIKVLNHSYINLKDI) form a coiled coil. The helical transmembrane segment at 1294 to 1314 (WYVWLLICLAGVVMLVLLFFI) threads the bilayer. Residues 1315–1349 (CCCTGCGTSCFKKCGGCFDDYTGHQEFVIKTSHDD) are Cytoplasmic-facing. The short motif at 1345–1349 (TSHDD) is the KxHxx element.

The protein belongs to the betacoronaviruses spike protein family. As to quaternary structure, homotrimer; each monomer consists of a S1 and a S2 subunit. The resulting peplomers protrude from the virus surface as spikes. Specific enzymatic cleavages in vivo yield mature proteins. The precursor is processed into S1 and S2 by host cell furin or another cellular protease to yield the mature S1 and S2 proteins. Additionally, a second cleavage leads to the release of a fusion peptide after viral attachment to host cell receptor. Post-translationally, the cytoplasmic Cys-rich domain is palmitoylated. Spike glycoprotein is digested within host endosomes.

The protein resides in the virion membrane. It localises to the host endoplasmic reticulum-Golgi intermediate compartment membrane. It is found in the host cell membrane. In terms of biological role, attaches the virion to the cell membrane by interacting with host receptor, initiating the infection. Functionally, mediates fusion of the virion and cellular membranes by acting as a class I viral fusion protein. Under the current model, the protein has at least three conformational states: pre-fusion native state, pre-hairpin intermediate state, and post-fusion hairpin state. During viral and target cell membrane fusion, the coiled coil regions (heptad repeats) assume a trimer-of-hairpins structure, positioning the fusion peptide in close proximity to the C-terminal region of the ectodomain. The formation of this structure appears to drive apposition and subsequent fusion of viral and target cell membranes. Acts as a viral fusion peptide which is unmasked following S2 cleavage occurring upon virus endocytosis. The sequence is that of Spike glycoprotein from Porcine hemagglutinating encephalomyelitis virus (strain IAF-404) (HEV).